Here is a 229-residue protein sequence, read N- to C-terminus: Potassium/proton antiporter CemA (229 aa).

Helical transmembrane passes span 7–27 (LNPL…SLSF), 106–126 (IILH…YSIL), and 189–209 (IISG…KYWI).

Belongs to the CemA family.

Its subcellular location is the plastid. The protein resides in the chloroplast inner membrane. It catalyses the reaction K(+)(in) + H(+)(out) = K(+)(out) + H(+)(in). Its function is as follows. Contributes to K(+)/H(+) antiport activity by supporting proton efflux to control proton extrusion and homeostasis in chloroplasts in a light-dependent manner to modulate photosynthesis. Prevents excessive induction of non-photochemical quenching (NPQ) under continuous-light conditions. Indirectly promotes efficient inorganic carbon uptake into chloroplasts. This is Potassium/proton antiporter CemA from Nymphaea alba (White water-lily).